The following is a 243-amino-acid chain: tRNA (guanine-N(1)-)-methyltransferase (243 aa).

S-adenosyl-L-methionine contacts are provided by residues Gly108 and 127-132 (LGDFVL).

The protein belongs to the RNA methyltransferase TrmD family. In terms of assembly, homodimer.

The protein localises to the cytoplasm. The enzyme catalyses guanosine(37) in tRNA + S-adenosyl-L-methionine = N(1)-methylguanosine(37) in tRNA + S-adenosyl-L-homocysteine + H(+). Specifically methylates guanosine-37 in various tRNAs. This Streptococcus equi subsp. equi (strain 4047) protein is tRNA (guanine-N(1)-)-methyltransferase.